The sequence spans 156 residues: ATP synthase subunit b (156 aa).

Residues 7–27 (LFLQAVVFAILVWFTMKFVWP) traverse the membrane as a helical segment.

Belongs to the ATPase B chain family. F-type ATPases have 2 components, F(1) - the catalytic core - and F(0) - the membrane proton channel. F(1) has five subunits: alpha(3), beta(3), gamma(1), delta(1), epsilon(1). F(0) has three main subunits: a(1), b(2) and c(10-14). The alpha and beta chains form an alternating ring which encloses part of the gamma chain. F(1) is attached to F(0) by a central stalk formed by the gamma and epsilon chains, while a peripheral stalk is formed by the delta and b chains.

It is found in the cell inner membrane. F(1)F(0) ATP synthase produces ATP from ADP in the presence of a proton or sodium gradient. F-type ATPases consist of two structural domains, F(1) containing the extramembraneous catalytic core and F(0) containing the membrane proton channel, linked together by a central stalk and a peripheral stalk. During catalysis, ATP synthesis in the catalytic domain of F(1) is coupled via a rotary mechanism of the central stalk subunits to proton translocation. Functionally, component of the F(0) channel, it forms part of the peripheral stalk, linking F(1) to F(0). The sequence is that of ATP synthase subunit b from Polaromonas naphthalenivorans (strain CJ2).